We begin with the raw amino-acid sequence, 66 residues long: MPKMKTHRGAAKRVKRTASGKLKRSRAFTSHLFANKSTKQKRKLRKASLVSKSDMKRVKQLLAYKK.

Residues 1-26 (MPKMKTHRGAAKRVKRTASGKLKRSR) are compositionally biased toward basic residues. The interval 1-49 (MPKMKTHRGAAKRVKRTASGKLKRSRAFTSHLFANKSTKQKRKLRKASL) is disordered.

Belongs to the bacterial ribosomal protein bL35 family.

The protein is Large ribosomal subunit protein bL35 of Staphylococcus carnosus (strain TM300).